Reading from the N-terminus, the 95-residue chain is Aspartyl/glutamyl-tRNA(Asn/Gln) amidotransferase subunit C (95 aa).

Belongs to the GatC family. As to quaternary structure, heterotrimer of A, B and C subunits.

It carries out the reaction L-glutamyl-tRNA(Gln) + L-glutamine + ATP + H2O = L-glutaminyl-tRNA(Gln) + L-glutamate + ADP + phosphate + H(+). It catalyses the reaction L-aspartyl-tRNA(Asn) + L-glutamine + ATP + H2O = L-asparaginyl-tRNA(Asn) + L-glutamate + ADP + phosphate + 2 H(+). Functionally, allows the formation of correctly charged Asn-tRNA(Asn) or Gln-tRNA(Gln) through the transamidation of misacylated Asp-tRNA(Asn) or Glu-tRNA(Gln) in organisms which lack either or both of asparaginyl-tRNA or glutaminyl-tRNA synthetases. The reaction takes place in the presence of glutamine and ATP through an activated phospho-Asp-tRNA(Asn) or phospho-Glu-tRNA(Gln). This chain is Aspartyl/glutamyl-tRNA(Asn/Gln) amidotransferase subunit C, found in Brucella abortus (strain S19).